Reading from the N-terminus, the 1192-residue chain is Integrator complex subunit 2 (1192 aa).

Residues 420–436 (FVSLSFCMLLAFSTLVS) form a helical membrane-spanning segment.

The protein belongs to the Integrator subunit 2 family. Component of the Integrator complex, composed of core subunits INTS1, INTS2, INTS3, INTS4, INTS5, INTS6, INTS7, INTS8, INTS9/RC74, INTS10, INTS11/CPSF3L, INTS12, INTS13, INTS14 and INTS15. The core complex associates with protein phosphatase 2A subunits PPP2CA and PPP2R1A, to form the Integrator-PP2A (INTAC) complex.

It is found in the nucleus. The protein localises to the nucleus membrane. It localises to the cytoplasm. Its function is as follows. Component of the integrator complex, a multiprotein complex that terminates RNA polymerase II (Pol II) transcription in the promoter-proximal region of genes. The integrator complex provides a quality checkpoint during transcription elongation by driving premature transcription termination of transcripts that are unfavorably configured for transcriptional elongation: the complex terminates transcription by (1) catalyzing dephosphorylation of the C-terminal domain (CTD) of Pol II subunit POLR2A/RPB1 and SUPT5H/SPT5, (2) degrading the exiting nascent RNA transcript via endonuclease activity and (3) promoting the release of Pol II from bound DNA. The integrator complex is also involved in terminating the synthesis of non-coding Pol II transcripts, such as enhancer RNAs (eRNAs), small nuclear RNAs (snRNAs), telomerase RNAs and long non-coding RNAs (lncRNAs). In Gallus gallus (Chicken), this protein is Integrator complex subunit 2 (INTS2).